The primary structure comprises 92 residues: Integration host factor subunit beta (92 aa).

This sequence belongs to the bacterial histone-like protein family. Heterodimer of an alpha and a beta chain.

This protein is one of the two subunits of integration host factor, a specific DNA-binding protein that functions in genetic recombination as well as in transcriptional and translational control. This chain is Integration host factor subunit beta, found in Azotobacter vinelandii (strain DJ / ATCC BAA-1303).